Consider the following 146-residue polypeptide: Basic phospholipase A2 beta-bungarotoxin A1 chain (146 aa).

A signal peptide spans 1–19 (MNPAHLLVLPAVCVSFLGA). Positions 20–27 (SIIPPQSL) are excised as a propeptide. Cystine bridges form between cysteine 54/cysteine 145, cysteine 56/cysteine 72, cysteine 71/cysteine 126, cysteine 78/cysteine 119, cysteine 87/cysteine 112, and cysteine 105/cysteine 117. Ca(2+) is bound by residues tyrosine 55, glycine 57, and glycine 59. The active site involves histidine 75. Aspartate 76 is a Ca(2+) binding site. Aspartate 120 is an active-site residue.

Belongs to the phospholipase A2 family. Group I subfamily. D49 sub-subfamily. As to quaternary structure, heterodimer with beta-bungarotoxin B chain; disulfide-linked. The A chain has phospholipase A2 activity and the B chain shows homology with the basic protease inhibitors. The cofactor is Ca(2+). In terms of tissue distribution, expressed by the venom gland.

It localises to the secreted. The enzyme catalyses a 1,2-diacyl-sn-glycero-3-phosphocholine + H2O = a 1-acyl-sn-glycero-3-phosphocholine + a fatty acid + H(+). In terms of biological role, snake venom phospholipase A2 (PLA2) that inhibits neuromuscular transmission by blocking acetylcholine release from the nerve termini. PLA2 catalyzes the calcium-dependent hydrolysis of the 2-acyl groups in 3-sn-phosphoglycerides. This Bungarus flaviceps flaviceps (Red-headed krait) protein is Basic phospholipase A2 beta-bungarotoxin A1 chain.